The primary structure comprises 254 residues: Anti-sigma-M factor RsmA (254 aa).

Residues 1-112 (MSAADKDPDK…AARPHVHPVR (112 aa)) are Cytoplasmic-facing. A helical transmembrane segment spans residues 113-133 (MIAGAAGLCAVATAIGVGAVV). Residues 134–254 (DAPPPAPSAP…LLASTVVPRA (121 aa)) lie on the Extracellular side of the membrane.

As to quaternary structure, interacts with ECF RNA polymerase sigma factor SigM; this should inhibit the interaction of SigM with the RNA polymerase catalytic core. In terms of processing, probably cleaved within the membrane by Rip1 near the cytoplasmic membrane interface.

Its subcellular location is the cell membrane. In terms of biological role, an anti-sigma factor for extracytoplasmic function (ECF) sigma factor SigM. ECF sigma factors are held in an inactive form by an anti-sigma factor until released by regulated intramembrane proteolysis (RIP). RIP occurs when an extracytoplasmic signal triggers a concerted proteolytic cascade to transmit information and elicit cellular responses. The membrane-spanning regulatory substrate protein is first cut extracytoplasmically (site-1 protease, S1P), then within the membrane itself (site-2 protease, S2P, Rip1), while cytoplasmic proteases finish degrading the regulatory protein, liberating the sigma factor. In Mycobacterium tuberculosis (strain ATCC 35801 / TMC 107 / Erdman), this protein is Anti-sigma-M factor RsmA (rsmA).